Here is a 130-residue protein sequence, read N- to C-terminus: Small ribosomal subunit protein uS9 (130 aa).

The interval 108 to 130 (SREKERKKYGQRGARARFQYSKR) is disordered.

It belongs to the universal ribosomal protein uS9 family.

The sequence is that of Small ribosomal subunit protein uS9 from Solidesulfovibrio magneticus (strain ATCC 700980 / DSM 13731 / RS-1) (Desulfovibrio magneticus).